The primary structure comprises 277 residues: Phosphatidylglycerol--prolipoprotein diacylglyceryl transferase (277 aa).

3 helical membrane passes run 17-37 (LAIHWYGLSYLAAFGLFMLLG), 63-83 (ILFLGVAGVVLGGRLGYCLFY), and 101-121 (GGMAFHGGLLGVIVAMLWFAH). R146 contributes to the a 1,2-diacyl-sn-glycero-3-phospho-(1'-sn-glycerol) binding site. Transmembrane regions (helical) follow at residues 182–202 (SQVYQFLLEGLLLFVLLWLYA), 209–229 (GQVAAAFLVGYGVLRFIAEQF), and 234–254 (AFLGILALGMSMGQWLCLPMI).

It belongs to the Lgt family.

Its subcellular location is the cell inner membrane. It catalyses the reaction L-cysteinyl-[prolipoprotein] + a 1,2-diacyl-sn-glycero-3-phospho-(1'-sn-glycerol) = an S-1,2-diacyl-sn-glyceryl-L-cysteinyl-[prolipoprotein] + sn-glycerol 1-phosphate + H(+). It participates in protein modification; lipoprotein biosynthesis (diacylglyceryl transfer). Catalyzes the transfer of the diacylglyceryl group from phosphatidylglycerol to the sulfhydryl group of the N-terminal cysteine of a prolipoprotein, the first step in the formation of mature lipoproteins. The protein is Phosphatidylglycerol--prolipoprotein diacylglyceryl transferase of Verminephrobacter eiseniae (strain EF01-2).